The primary structure comprises 380 residues: MSKRDYYEILGVTKTATEGEMKVAFRKLAMTYHPDRNPGDKDAEIKFKEINEAYQCLSDGQKRAAYDRFGHAAFSQGGGGPGFGNEFGDFMSDIFDNFFGDGRGGGGARGRGGTPGRERGADLRYNLEITLEEAFTGKAETIKIPTSITCEVCDGSGAKPGSKPRTCPTCAGYGRVRAAQGFFAIERTCPNCHGRGEIVDDPCTACQGAGRVNRERTLSINVPAGVDDGLRIRLAGEGESGLRGGPAGDLYVFLSIKQHEFFQRDGADLFCRVPISMVTAALSGEITVPVIDGSQTQVRIPAGTQTAKQFRIKGKGMPVLRSREVGDLYIQVFVETPQNLTKRQRELLQEFDLSASPENHPESAGFFSKVRDFFGGAVRP.

In terms of domain architecture, J spans 5 to 70; sequence DYYEILGVTK…QKRAAYDRFG (66 aa). The CR-type zinc finger occupies 137–215; the sequence is GKAETIKIPT…CQGAGRVNRE (79 aa). C150, C153, C167, C170, C189, C192, C203, and C206 together coordinate Zn(2+). CXXCXGXG motif repeat units lie at residues 150 to 157, 167 to 174, 189 to 196, and 203 to 210; these read CEVCDGSG, CPTCAGYG, CPNCHGRG, and CTACQGAG.

It belongs to the DnaJ family. Homodimer. The cofactor is Zn(2+).

Its subcellular location is the cytoplasm. Functionally, participates actively in the response to hyperosmotic and heat shock by preventing the aggregation of stress-denatured proteins and by disaggregating proteins, also in an autonomous, DnaK-independent fashion. Unfolded proteins bind initially to DnaJ; upon interaction with the DnaJ-bound protein, DnaK hydrolyzes its bound ATP, resulting in the formation of a stable complex. GrpE releases ADP from DnaK; ATP binding to DnaK triggers the release of the substrate protein, thus completing the reaction cycle. Several rounds of ATP-dependent interactions between DnaJ, DnaK and GrpE are required for fully efficient folding. Also involved, together with DnaK and GrpE, in the DNA replication of plasmids through activation of initiation proteins. This Methylobacterium radiotolerans (strain ATCC 27329 / DSM 1819 / JCM 2831 / NBRC 15690 / NCIMB 10815 / 0-1) protein is Chaperone protein DnaJ.